A 345-amino-acid polypeptide reads, in one-letter code: Probable glucan endo-1,3-beta-glucosidase BG4 (345 aa).

An N-terminal signal peptide occupies residues 1 to 22 (MLYSPKKLFLFFLSCIVLYVNS). N-linked (GlcNAc...) asparagine glycans are attached at residues Asn-23 and Asn-119. Glu-128 acts as the Proton donor in catalysis. The active-site Nucleophile is Glu-267. Residues Asn-277 and Asn-306 are each glycosylated (N-linked (GlcNAc...) asparagine).

This sequence belongs to the glycosyl hydrolase 17 family.

It is found in the secreted. It carries out the reaction Hydrolysis of (1-&gt;3)-beta-D-glucosidic linkages in (1-&gt;3)-beta-D-glucans.. Its function is as follows. May play a role in plant defense against pathogens. The polypeptide is Probable glucan endo-1,3-beta-glucosidase BG4 (Arabidopsis thaliana (Mouse-ear cress)).